The primary structure comprises 509 residues: Glycogen synthase (509 aa).

An ADP-alpha-D-glucose-binding site is contributed by lysine 47.

It belongs to the glycosyltransferase 1 family. Bacterial/plant glycogen synthase subfamily.

It carries out the reaction [(1-&gt;4)-alpha-D-glucosyl](n) + ADP-alpha-D-glucose = [(1-&gt;4)-alpha-D-glucosyl](n+1) + ADP + H(+). Its pathway is glycan biosynthesis; glycogen biosynthesis. In terms of biological role, synthesizes alpha-1,4-glucan chains using ADP-glucose. This is Glycogen synthase from Xanthomonas oryzae pv. oryzae (strain PXO99A).